The primary structure comprises 2475 residues: Non-reducing polyketide synthase ausA (2475 aa).

The interval 14–253 (VLFGSKYSEI…HHADHLSAAQ (240 aa)) is N-terminal acylcarrier protein transacylase domain (SAT). One can recognise a Ketosynthase family 3 (KS3) domain in the interval 384–800 (SIPIAVTGLA…GSNAAIVLKE (417 aa)). Active-site for beta-ketoacyl synthase activity residues include Cys-549, His-684, and His-723. Residues 910–1212 (LCFGGQTGNK…CPMDLSGPQA (303 aa)) are malonyl-CoA:ACP transacylase (MAT) domain. Ser-997 acts as the For acyl/malonyl transferase activity in catalysis. Residues 1279–1407 (EDLKLVQLLK…GTISLSPGAD (129 aa)) form an N-terminal hotdog fold region. A PKS/mFAS DH domain is found at 1279-1586 (EDLKLVQLLK…FTSVSIQSLR (308 aa)). The interval 1282–1585 (KLVQLLKNEG…TFTSVSIQSL (304 aa)) is product template (PT) domain. His-1312 acts as the Proton acceptor; for dehydratase activity in catalysis. Residues 1435 to 1586 (SSSGLKRSTV…FTSVSIQSLR (152 aa)) are C-terminal hotdog fold. Residue Asp-1493 is the Proton donor; for dehydratase activity of the active site. Positions 1626–1703 (SSNGDDLRTV…ALVQRIFPGR (78 aa)) constitute a Carrier domain. An O-(pantetheine 4'-phosphoryl)serine modification is found at Ser-1663. Positions 1865 to 2098 (QHTSEHKLLH…GFNWVDWTDN (234 aa)) are methyltransferase (CMeT) domain. The tract at residues 2127–2475 (SAIHEETVVY…YEFLRSHVGL (349 aa)) is thioesterase (TE) domain. Active-site for thioesterase activity residues include Ser-2250, Asp-2412, and His-2444.

It catalyses the reaction 3 malonyl-CoA + acetyl-CoA + 2 S-adenosyl-L-methionine = 3,5-dimethylorsellinate + 2 S-adenosyl-L-homocysteine + 3 CO2 + 4 CoA. The protein operates within secondary metabolite biosynthesis; terpenoid biosynthesis. Its function is as follows. Non-reducing polyketide synthase; part of the gene cluster A that mediates the biosynthesis of the fungal meroterpenoid acetoxydehydroaustin. The first step of the pathway is the synthesis of 3,5-dimethylorsellinic acid by the polyketide synthase ausA. 3,5-dimethylorsellinic acid is then prenylated by the polyprenyl transferase ausN. Further epoxidation by the FAD-dependent monooxygenase ausM and cyclization by the probable terpene cyclase ausL lead to the formation of protoaustinoid A. Protoaustinoid A is then oxidized to spiro-lactone preaustinoid A3 by the combined action of the FAD-binding monooxygenases ausB and ausC, and the dioxygenase ausE. Acid-catalyzed keto-rearrangement and ring contraction of the tetraketide portion of preaustinoid A3 by ausJ lead to the formation of preaustinoid A4. The aldo-keto reductase ausK, with the help of ausH, is involved in the next step by transforming preaustinoid A4 into isoaustinone which is in turn hydroxylated by the P450 monooxygenase ausI to form austinolide. The cytochrome P450 monooxygenase ausG then modifies austinolide to austinol. Austinol is further acetylated to austin by the O-acetyltransferase ausP, which spontaneously changes to dehydroaustin. The cytochrome P450 monooxygenase then converts dehydroaustin is into 7-dehydrodehydroaustin. The hydroxylation catalyzed by ausR permits the second O-acetyltransferase ausQ to add an additional acetyl group to the molecule, leading to the formation of acetoxydehydroaustin. Due to genetic rearrangements of the clusters and the subsequent loss of some enzymes, the end product of the Penicillium brasilianum austinoid biosynthesis clusters is acetoxydehydroaustin. This is Non-reducing polyketide synthase ausA from Penicillium brasilianum.